A 172-amino-acid polypeptide reads, in one-letter code: Shikimate kinase (172 aa).

11–16 is an ATP binding site; the sequence is GSGKTT. Threonine 15 serves as a coordination point for Mg(2+). Substrate contacts are provided by aspartate 33, arginine 57, and glycine 79. Arginine 117 is a binding site for ATP. Arginine 136 serves as a coordination point for substrate.

Belongs to the shikimate kinase family. In terms of assembly, monomer. Mg(2+) is required as a cofactor.

Its subcellular location is the cytoplasm. The catalysed reaction is shikimate + ATP = 3-phosphoshikimate + ADP + H(+). The protein operates within metabolic intermediate biosynthesis; chorismate biosynthesis; chorismate from D-erythrose 4-phosphate and phosphoenolpyruvate: step 5/7. Its function is as follows. Catalyzes the specific phosphorylation of the 3-hydroxyl group of shikimic acid using ATP as a cosubstrate. In Caldicellulosiruptor saccharolyticus (strain ATCC 43494 / DSM 8903 / Tp8T 6331), this protein is Shikimate kinase.